Here is a 289-residue protein sequence, read N- to C-terminus: Bis(5'-nucleosyl)-tetraphosphatase, symmetrical (289 aa).

The protein belongs to the Ap4A hydrolase family.

The catalysed reaction is P(1),P(4)-bis(5'-adenosyl) tetraphosphate + H2O = 2 ADP + 2 H(+). Its function is as follows. Hydrolyzes diadenosine 5',5'''-P1,P4-tetraphosphate to yield ADP. The protein is Bis(5'-nucleosyl)-tetraphosphatase, symmetrical of Yersinia pestis bv. Antiqua (strain Antiqua).